The primary structure comprises 525 residues: Heat shock factor protein 1 (525 aa).

Met1 is modified (N-acetylmethionine). A DNA-binding domain region spans residues 15–120 (VPAFLTKLWT…LLENIKRKVT (106 aa)). At Lys80 the chain carries N6-acetyllysine. The residue at position 91 (Lys91) is an N6-acetyllysine; alternate. A Glycyl lysine isopeptide (Lys-Gly) (interchain with G-Cter in SUMO2); alternate cross-link involves residue Lys91. Position 118 is an N6-acetyllysine (Lys118). Ser121 is subject to Phosphoserine; by MAPKAPK2. Glycyl lysine isopeptide (Lys-Gly) (interchain with G-Cter in SUMO2) cross-links involve residues Lys126 and Lys131. The hydrophobic repeat HR-A/B stretch occupies residues 130–203 (IKIRQDSVTR…ISLVQSNRIL (74 aa)). The residue at position 142 (Thr142) is a Phosphothreonine; by CK2. N6-acetyllysine is present on residues Lys150 and Lys188. The segment at 203-224 (LGVKRKIPLMLSDSNSAHSVPK) is d domain. Position 208 is an N6-acetyllysine; alternate (Lys208). Lys208 participates in a covalent cross-link: Glycyl lysine isopeptide (Lys-Gly) (interchain with G-Cter in SUMO2); alternate. Position 216 is a phosphoserine; by PLK1 (Ser216). Residues 221 to 310 (SVPKYGRQYS…PPSPPHSPRV (90 aa)) form a regulatory domain region. Lys224 participates in a covalent cross-link: Glycyl lysine isopeptide (Lys-Gly) (interchain with G-Cter in SUMO2). Ser230 carries the post-translational modification Phosphoserine; by CAMK2A. Disordered stretches follow at residues 272-327 (APTS…PLSP) and 340-365 (PTPA…TPST). Phosphoserine occurs at positions 275 and 292. The residue at position 298 (Lys298) is an N6-acetyllysine; alternate. A Glycyl lysine isopeptide (Lys-Gly) (interchain with G-Cter in SUMO2); alternate cross-link involves residue Lys298. Lys298 participates in a covalent cross-link: Glycyl lysine isopeptide (Lys-Gly) (interchain with G-Cter in SUMO); alternate. Residues Ser303, Ser307, Ser314, and Ser319 each carry the phosphoserine modification. A Phosphoserine; by PKA modification is found at Ser320. Thr323 carries the phosphothreonine modification. Ser326 is modified (phosphoserine; by MAPK12). Over residues 343 to 355 (AASNTAPMDTTGA) the composition is skewed to polar residues. Ser345 is modified (phosphoserine). The interval 367 to 525 (EKCLSVACLD…PHKAKDPTVS (159 aa)) is transactivation domain. Positions 380-405 (LSDHLDAMDSNLDNLQTMLTSHGFSV) are hydrophobic repeat HR-C. Positions 408 to 416 (SALLDLFSP) match the 9aaTAD motif. Phosphoserine; by PLK1 is present on Ser415. Ser440 is modified (phosphoserine). 2 disordered regions span residues 441 to 460 (PQEP…SGKQ) and 495 to 525 (YFSE…PTVS). Residues 515-525 (EPHKAKDPTVS) are compositionally biased toward basic and acidic residues. The residue at position 520 (Lys520) is an N6-acetyllysine.

This sequence belongs to the HSF family. Monomer; cytoplasmic latent and transcriptionally inactive monomeric form in unstressed cells. Homotrimer; in response to stress, such as heat shock, homotrimerizes and translocates into the nucleus, binds to heat shock element (HSE) sequences in promoter of heat shock protein (HSP) genes and acquires transcriptional ability. Interacts (via monomeric form) with FKBP4; this interaction occurs in unstressed cells. Associates (via monomeric form) with HSP90 proteins in a multichaperone complex in unnstressed cell; this association maintains HSF1 in a non-DNA-binding and transcriptional inactive form by preventing HSF1 homotrimerization. Homotrimeric transactivation activity is modulated by protein-protein interactions and post-translational modifications. Interacts with HSP90AA1; this interaction is decreased in a IER5-dependent manner, promoting HSF1 accumulation in the nucleus, homotrimerization and DNA-binding activities. Part (via regulatory domain in the homotrimeric form) of a large heat shock-induced HSP90-dependent multichaperone complex at least composed of FKBP4, FKBP5, HSP90 proteins, PPID, PPP5C and PTGES3; this association maintains the HSF1 homotrimeric DNA-bound form in a transcriptionally inactive form. Interacts with BAG3 (via BAG domain); this interaction occurs in normal and heat-shocked cells promoting nuclear shuttling of HSF1 in a BAG3-dependent manner. Interacts (via homotrimeric and hyperphosphorylated form) with FKBP4; this interaction occurs upon heat shock in a HSP90-dependent multichaperone complex. Interacts (via homotrimeric form preferentially) with EEF1A proteins. In heat shocked cells, stress-denatured proteins compete with HSF1 homotrimeric DNA-bound form for association of the HSP90-dependent multichaperone complex, and hence alleviating repression of HSF1-mediated transcriptional activity. Interacts (via homotrimeric form preferentially) with DAXX; this interaction relieves homotrimeric HSF1 from repression of its transcriptional activity by HSP90-dependent multichaperone complex upon heat shock. Interacts (via D domain and preferentially with hyperphosphorylated form) with JNK1; this interaction occurs under both normal growth conditions and immediately upon heat shock. Interacts (via D domain and preferentially with hyperphosphorylated form) with MAPK3; this interaction occurs upon heat shock. Interacts with IER5 (via central region); this interaction promotes PPP2CA-induced dephosphorylation on Ser-121, Ser-307, Ser-314 and Thr-323 and HSF1 transactivation activity. Found in a ribonucleoprotein complex composed of the HSF1 homotrimeric form, translation elongation factor eEF1A proteins and non-coding RNA heat shock RNA-1 (HSR1); this complex occurs upon heat shock and stimulates HSF1 DNA-binding activity. Interacts (via transactivation domain) with HSPA1A/HSP70 and DNAJB1; these interactions result in the inhibition of heat shock- and HSF1-induced transcriptional activity during the attenuation and recovery phase from heat shock. Interacts (via Ser-303 and Ser-307 phosphorylated form) with YWHAE; this interaction promotes HSF1 sequestration in the cytoplasm in an ERK-dependent manner. Found in a complex with IER5 and PPP2CA. Interacts with TPR; this interaction increases upon heat shock and stimulates export of HSP70 mRNA. Interacts with SYMPK (via N-terminus) and CSTF2; these interactions occur upon heat shock. Interacts (via transactivation domain) with HSPA8. Interacts with EEF1D; this interaction occurs at heat shock promoter element (HSE) sequences. Interacts with MAPKAPK2. Interacts with PRKACA/PKA. Interacts (via transactivation domain) with GTF2A2. Interacts (via transactivation domain) with GTF2B. Interacts (via transactivation domain) with TBP. Interacts with CDK9, CCNT1 and EP300. Interacts (via N-terminus) with XRCC5 (via N-terminus) and XRCC6 (via N-terminus); these interactions are direct and prevent XRCC5/XRCC6 heterodimeric binding and non-homologous end joining (NHEJ) repair activities induced by ionizing radiation (IR). Interacts with PLK1; this interaction occurs during the early mitotic period, increases upon heat shock but does not modulate neither HSF1 homotrimerization and DNA-binding activities. Interacts (via Ser-216 phosphorylated form) with CDC20; this interaction occurs in mitosis in a MAD2L1-dependent manner and prevents PLK1-stimulated degradation of HSF1 by blocking the recruitment of the SCF(BTRC) ubiquitin ligase complex. Interacts with MAD2L1; this interaction occurs in mitosis. Interacts with BTRC; this interaction occurs during mitosis, induces its ubiquitin-dependent degradation following stimulus-dependent phosphorylation at Ser-216, a process inhibited by CDC20. Interacts with HSP90AA1 and HSP90AB1. Forms a complex with TTC5/STRAP and p300/EP300; these interactions augment chromatin-bound HSF1 and p300/EP300 histone acetyltransferase activity. In terms of processing, phosphorylated. Phosphorylated in unstressed cells; this phosphorylation is constitutive and implicated in the repression of HSF1 transcriptional activity. Phosphorylated on Ser-121 by MAPKAPK2; this phosphorylation promotes interaction with HSP90 proteins and inhibits HSF1 homotrimerization, DNA-binding and transactivation activities. Phosphorylation on Ser-303 by GSK3B/GSK3-beat and on Ser-307 by MAPK3 within the regulatory domain is involved in the repression of HSF1 transcriptional activity and occurs in a RAF1-dependent manner. Phosphorylation on Ser-303 and Ser-307 increases HSF1 nuclear export in a YWHAE- and XPO1/CRM1-dependent manner. Phosphorylation on Ser-307 is a prerequisite for phosphorylation on Ser-303. According to, Ser-303 is not phosphorylated in unstressed cells. Phosphorylated on Ser-415 by PLK1; phosphorylation promotes nuclear translocation upon heat shock. Hyperphosphorylated upon heat shock and during the attenuation and recovery phase period of the heat shock response. Phosphorylated on Thr-142; this phosphorylation increases HSF1 transactivation activity upon heat shock. Phosphorylation on Ser-230 by CAMK2A; this phosphorylation enhances HSF1 transactivation activity upon heat shock. Phosphorylation on Ser-326 by MAPK12; this phosphorylation enhances HSF1 nuclear translocation, homotrimerization and transactivation activities upon heat shock. Phosphorylated on Ser-320 by PRKACA/PKA; this phosphorylation promotes nuclear localization and transcriptional activity upon heat shock. Phosphorylated by MAPK8; this phosphorylation occurs upon heat shock, induces HSF1 translocation into nuclear stress bodies and negatively regulates transactivation activity. Neither basal nor stress-inducible phosphorylation on Ser-230, Ser-292, Ser-303, Ser-307, Ser-314, Ser-319, Ser-320, Thr-323, Ser-326, Ser-338, Ser-345, Ser-364 and Thr-365 within the regulatory domain is involved in the regulation of HSF1 subcellular localization or DNA-binding activity; however, it negatively regulates HSF1 transactivation activity. Phosphorylated on Ser-216 by PLK1 in the early mitotic period; this phosphorylation regulates HSF1 localization to the spindle pole, the recruitment of the SCF(BTRC) ubiquitin ligase complex inducing HSF1 degradation, and hence mitotic progression. Dephosphorylated on Ser-121, Ser-307, Ser-314 and Thr-323 by phosphatase PPP2CA in an IER5-dependent manner, leading to HSF1-mediated transactivation activity. Post-translationally, sumoylated with SUMO1 and SUMO2 upon heat shock in a ERK2-dependent manner. Sumoylated by SUMO1 on Lys-298; sumoylation occurs upon heat shock and promotes its localization to nuclear stress bodies and DNA-binding activity. Phosphorylation on Ser-303 and Ser-307 is probably a prerequisite for sumoylation. Acetylated on Lys-118; this acetylation is decreased in a IER5-dependent manner. Acetylated on Lys-118, Lys-208 and Lys-298; these acetylations occur in a EP300-dependent manner. Acetylated on Lys-80; this acetylation inhibits DNA-binding activity upon heat shock. Deacetylated on Lys-80 by SIRT1; this deacetylation increases DNA-binding activity. In terms of processing, ubiquitinated by SCF(BTRC) and degraded following stimulus-dependent phosphorylation at Ser-216 by PLK1 in mitosis. Polyubiquitinated. Undergoes proteasomal degradation upon heat shock and during the attenuation and recovery phase period of the heat shock response.

Its subcellular location is the nucleus. The protein localises to the cytoplasm. It is found in the nucleoplasm. It localises to the perinuclear region. The protein resides in the cytoskeleton. Its subcellular location is the spindle pole. The protein localises to the microtubule organizing center. It is found in the centrosome. It localises to the chromosome. The protein resides in the centromere. Its subcellular location is the kinetochore. Functions as a stress-inducible and DNA-binding transcription factor that plays a central role in the transcriptional activation of the heat shock response (HSR), leading to the expression of a large class of molecular chaperones, heat shock proteins (HSPs), that protect cells from cellular insult damage. In unstressed cells, is present in a HSP90-containing multichaperone complex that maintains it in a non-DNA-binding inactivated monomeric form. Upon exposure to heat and other stress stimuli, undergoes homotrimerization and activates HSP gene transcription through binding to site-specific heat shock elements (HSEs) present in the promoter regions of HSP genes. Upon heat shock stress, forms a chromatin-associated complex with TTC5/STRAP and p300/EP300 to stimulate HSR transcription, therefore increasing cell survival. Activation is reversible, and during the attenuation and recovery phase period of the HSR, returns to its unactivated form. Binds to inverted 5'-NGAAN-3' pentamer DNA sequences. Binds to chromatin at heat shock gene promoters. Activates transcription of transcription factor FOXR1 which in turn activates transcription of the heat shock chaperones HSPA1A and HSPA6 and the antioxidant NADPH-dependent reductase DHRS2. Binds the promoter region upstream of exon 1 of Mpv17l to activate expression of the M-LPS isoform which is involved in metabolism of reactive oxygen species. Also serves several other functions independently of its transcriptional activity. Involved in the repression of Ras-induced transcriptional activation of the c-fos gene in heat-stressed cells. Positively regulates pre-mRNA 3'-end processing and polyadenylation of HSP70 mRNA upon heat-stressed cells in a symplekin (SYMPK)-dependent manner. Plays a role in nuclear export of stress-induced HSP70 mRNA. Plays a role in the regulation of mitotic progression. Also plays a role as a negative regulator of non-homologous end joining (NHEJ) repair activity in a DNA damage-dependent manner. Involved in stress-induced cancer cell proliferation in a IER5-dependent manner. In Mus musculus (Mouse), this protein is Heat shock factor protein 1.